We begin with the raw amino-acid sequence, 871 residues long: CRISPR system Cmr subunit Cmr2 (871 aa).

Residues 1-215 (MVNIKEKLFV…THLDLTSALS (215 aa)) form a not required for target RNA cleavage region. Mn(2+) is bound by residues H13, D14, and H25. Residues C448, C451, C478, and C481 each coordinate Zn(2+). A GGDEF domain is found at 592–752 (KYYAILVMDG…GKDTLAIGLL (161 aa)). Mn(2+) contacts are provided by D600, E656, D673, D674, E694, and E700.

It belongs to the CRISPR system Cmr2 family. Part of the type III-B Cmr ribonucleoprotein (RNP) complex, an elongated RNP with Cmr2 and Cmr3 as the base, with Cmr4 and Cmr5 forming a helical core along the mature crRNA (39 or 45 nt in length), while the complex is capped by Cmr6 and Cmr1. The 5' end of the crRNA is bound to Cmr2 and Cmr3, while Cmr6 and a Cmr1 subunit (Cmr1-1 or Cmr1-2) cap the 3' end of the crRNA. The target RNA lies antiparallel to the crRNA, with its 5' end near Cmr1 and Cmr6 and its 3' end near Cmr2 and Cmr3; major target cleavage occurs nears the junction of Cmr1/Cmr6 and Cmr4/Cmr, with minor cleavage occurring at 6 nt intervals which coincide with the proposed spacing of Cmr4 subunits. Forms a 1:1 complex with Cmr3. The Cmr2-Cmr3 complex non-specifically binds ss-target RNA and crRNA. Interacts with Cmr3, Cmr4 and Cmr5. Ca(2+) is required as a cofactor. The cofactor is Mn(2+). Requires Zn(2+) as cofactor.

The protein resides in the cytoplasm. Its function is as follows. CRISPR (clustered regularly interspaced short palindromic repeat), is an adaptive immune system that provides protection against mobile genetic elements (viruses, transposable elements and conjugative plasmids). CRISPR clusters contain sequences complementary to antecedent mobile elements and target invading nucleic acids. CRISPR clusters are transcribed and processed into CRISPR RNA (crRNA), formerly called psiRNA (prokaryotic silencing) in this organism. Part of the Cmr ribonucleoprotein complex which has divalent cation-dependent endoribonuclease activity specific for ssRNA complementary to the crRNA (target RNA), generating 5' hydroxy- and 3' phosphate or 2'-3' cyclic phosphate termini. Cmr4 is probably the subunit that cleaves target RNA. Cmr complex does not cleave ssDNA complementary to the crRNA. Cleavage of target RNA is guided by the crRNA; substrate cleavage occurs a fixed distance (14 nt) from the 3' end of the crRNA. In vitro reconstitution shows Cmr1-2 and Cmr5 are not absolutely necessary for target cleavage. This is CRISPR system Cmr subunit Cmr2 from Pyrococcus furiosus (strain ATCC 43587 / DSM 3638 / JCM 8422 / Vc1).